The chain runs to 197 residues: Holliday junction branch migration complex subunit RuvA (197 aa).

Residues 1–64 (MIASVRGTLI…EDALTLYGFK (64 aa)) are domain I. The domain II stretch occupies residues 65-145 (TVEQRQLFET…GLPVAPGVSP (81 aa)). The tract at residues 146 to 153 (AVAAVNAE) is flexible linker. The tract at residues 153 to 197 (ELSEMLVSLGFSSAEASTAIAALPPDAPLDLEERLRLALRYFGAR) is domain III.

Belongs to the RuvA family. In terms of assembly, homotetramer. Forms an RuvA(8)-RuvB(12)-Holliday junction (HJ) complex. HJ DNA is sandwiched between 2 RuvA tetramers; dsDNA enters through RuvA and exits via RuvB. An RuvB hexamer assembles on each DNA strand where it exits the tetramer. Each RuvB hexamer is contacted by two RuvA subunits (via domain III) on 2 adjacent RuvB subunits; this complex drives branch migration. In the full resolvosome a probable DNA-RuvA(4)-RuvB(12)-RuvC(2) complex forms which resolves the HJ.

The protein resides in the cytoplasm. In terms of biological role, the RuvA-RuvB-RuvC complex processes Holliday junction (HJ) DNA during genetic recombination and DNA repair, while the RuvA-RuvB complex plays an important role in the rescue of blocked DNA replication forks via replication fork reversal (RFR). RuvA specifically binds to HJ cruciform DNA, conferring on it an open structure. The RuvB hexamer acts as an ATP-dependent pump, pulling dsDNA into and through the RuvAB complex. HJ branch migration allows RuvC to scan DNA until it finds its consensus sequence, where it cleaves and resolves the cruciform DNA. This is Holliday junction branch migration complex subunit RuvA from Roseiflexus castenholzii (strain DSM 13941 / HLO8).